The chain runs to 442 residues: Limonoid 1-O-acetyltransferse (442 aa).

Active-site proton acceptor residues include His-155 and Asp-381.

The protein belongs to the plant acyltransferase family. As to quaternary structure, monomer.

The enzyme catalyses (1S)-1-hydroxy-luvungin A + acetyl-CoA = (1S)-1-acetoxy-luvungin A + CoA. The protein operates within secondary metabolite biosynthesis; terpenoid biosynthesis. Functionally, acetyltransferase involved in the biosynthesis of limonoids triterpene natural products such as limonin, a compound with insecticidal activity responsible for the bitter taste in citrus. Catalyzes the formation of (1S)-1-acetoxy-luvungin A from (1S)-1-hydroxy-luvungin A. This chain is Limonoid 1-O-acetyltransferse, found in Citrus sinensis (Sweet orange).